An 89-amino-acid chain; its full sequence is uncharacterized protein (89 aa).

This sequence to M.jannaschii MJ1436.

This is an uncharacterized protein from Methanothermobacter thermautotrophicus (strain ATCC 29096 / DSM 1053 / JCM 10044 / NBRC 100330 / Delta H) (Methanobacterium thermoautotrophicum).